A 287-amino-acid polypeptide reads, in one-letter code: 4-hydroxybenzoate octaprenyltransferase (287 aa).

Helical transmembrane passes span Ile23 to Gly40, Ile98 to Thr118, Leu141 to Val161, Glu163 to Tyr183, Ile213 to Thr233, and Leu235 to Ile255.

It belongs to the UbiA prenyltransferase family. Mg(2+) serves as cofactor.

Its subcellular location is the cell inner membrane. It catalyses the reaction all-trans-octaprenyl diphosphate + 4-hydroxybenzoate = 4-hydroxy-3-(all-trans-octaprenyl)benzoate + diphosphate. It participates in cofactor biosynthesis; ubiquinone biosynthesis. Functionally, catalyzes the prenylation of para-hydroxybenzoate (PHB) with an all-trans polyprenyl group. Mediates the second step in the final reaction sequence of ubiquinone-8 (UQ-8) biosynthesis, which is the condensation of the polyisoprenoid side chain with PHB, generating the first membrane-bound Q intermediate 3-octaprenyl-4-hydroxybenzoate. The protein is 4-hydroxybenzoate octaprenyltransferase of Pectobacterium atrosepticum (strain SCRI 1043 / ATCC BAA-672) (Erwinia carotovora subsp. atroseptica).